The chain runs to 338 residues: uncharacterized protein (338 aa).

This sequence belongs to the MG032/MG096/MG288 family.

This is an uncharacterized protein from Mycoplasma pneumoniae (strain ATCC 29342 / M129 / Subtype 1) (Mycoplasmoides pneumoniae).